We begin with the raw amino-acid sequence, 654 residues long: Protein fem-1 homolog A-like (654 aa).

ANK repeat units follow at residues 2–31 (DLHTAVYNAAHDGKLPLLQKLLASRGREEL), 40–70 (GGGTPLLIAARRGHLDVVEYLVDHCGASVEA), 82–111 (EGAPPLWAASAAGHLAVVRSLLHRGASVNR), 115–145 (TNSTPLRAACFNGHLDVVRCLVGEHKADLEV), 149–178 (HGHTCLMISCYKGHREIARYLLERGAQVNR), 182–211 (KGNTALHDCAESGSLEILQLLLSCHARMER), and 214–243 (YGMTPLLAASITGHTNIVEYLIQEQPSHEQ). Serine 108 is subject to Phosphoserine. Residues 241-265 (HEQLSGTELPGEGSSQMAGNHCSTP) form a disordered region. Residues 253–263 (GSSQMAGNHCS) show a composition bias toward polar residues. TPR repeat units follow at residues 283–317 (VEALELLGATYVDKKRDLLGALKHWRRAMELRHQG) and 375–408 (SYYIRYRGAVYADSGNFERCIRLWKYALDMQQNN). ANK repeat units follow at residues 519 to 561 (NGFT…DPDS) and 565 to 594 (DNNSPLHIAAQNNCPAIMDALIEAGAHMDA). Serine 608 is subject to Phosphoserine.

This sequence belongs to the fem-1 family. Component of a CRL2 E3 ubiquitin-protein ligase complex, also named ECS (Elongin BC-CUL2/5-SOCS-box protein) complex, composed of CUL2, Elongin BC (ELOB and ELOC), RBX1 and substrate-specific adapter FEM1A.

The protein resides in the mitochondrion. It localises to the cytoplasm. Its pathway is protein modification; protein ubiquitination. Its function is as follows. Substrate-recognition component of a Cul2-RING (CRL2) E3 ubiquitin-protein ligase complex of the DesCEND (destruction via C-end degrons) pathway, which recognizes a C-degron located at the extreme C terminus of target proteins, leading to their ubiquitination and degradation. The C-degron recognized by the DesCEND pathway is usually a motif of less than ten residues and can be present in full-length proteins, truncated proteins or proteolytically cleaved forms. The CRL2(FEM1A) complex specifically recognizes proteins with an arginine at the C-terminus: recognizes and binds proteins ending with -Lys/Arg-Xaa-Arg and -Lys/Arg-Xaa-Xaa-Arg C-degrons, such as SIL1 or OR51B2, leading to their ubiquitination and degradation. The protein is Protein fem-1 homolog A-like of Mus musculus (Mouse).